The chain runs to 201 residues: Probable nicotinate-nucleotide adenylyltransferase (201 aa).

This sequence belongs to the NadD family.

It catalyses the reaction nicotinate beta-D-ribonucleotide + ATP + H(+) = deamido-NAD(+) + diphosphate. The protein operates within cofactor biosynthesis; NAD(+) biosynthesis; deamido-NAD(+) from nicotinate D-ribonucleotide: step 1/1. Catalyzes the reversible adenylation of nicotinate mononucleotide (NaMN) to nicotinic acid adenine dinucleotide (NaAD). This Clostridium botulinum (strain ATCC 19397 / Type A) protein is Probable nicotinate-nucleotide adenylyltransferase.